Here is a 222-residue protein sequence, read N- to C-terminus: GTP cyclohydrolase 1 (222 aa).

Residues Cys-111, His-114, and Cys-182 each contribute to the Zn(2+) site.

The protein belongs to the GTP cyclohydrolase I family. In terms of assembly, toroid-shaped homodecamer, composed of two pentamers of five dimers.

The catalysed reaction is GTP + H2O = 7,8-dihydroneopterin 3'-triphosphate + formate + H(+). It functions in the pathway cofactor biosynthesis; 7,8-dihydroneopterin triphosphate biosynthesis; 7,8-dihydroneopterin triphosphate from GTP: step 1/1. This chain is GTP cyclohydrolase 1, found in Enterobacter sp. (strain 638).